Reading from the N-terminus, the 836-residue chain is DNA gyrase subunit A (836 aa).

Residues 34 to 500 (LPDARDGLKP…AGDVRDIEDI (467 aa)) enclose the Topo IIA-type catalytic domain. Y122 serves as the catalytic O-(5'-phospho-DNA)-tyrosine intermediate. A GyrA-box motif is present at residues 527 to 533 (QKRGGQG).

This sequence belongs to the type II topoisomerase GyrA/ParC subunit family. As to quaternary structure, heterotetramer, composed of two GyrA and two GyrB chains. In the heterotetramer, GyrA contains the active site tyrosine that forms a transient covalent intermediate with DNA, while GyrB binds cofactors and catalyzes ATP hydrolysis.

It is found in the cytoplasm. It catalyses the reaction ATP-dependent breakage, passage and rejoining of double-stranded DNA.. A type II topoisomerase that negatively supercoils closed circular double-stranded (ds) DNA in an ATP-dependent manner to modulate DNA topology and maintain chromosomes in an underwound state. Negative supercoiling favors strand separation, and DNA replication, transcription, recombination and repair, all of which involve strand separation. Also able to catalyze the interconversion of other topological isomers of dsDNA rings, including catenanes and knotted rings. Type II topoisomerases break and join 2 DNA strands simultaneously in an ATP-dependent manner. The protein is DNA gyrase subunit A of Chlamydia trachomatis serovar D (strain ATCC VR-885 / DSM 19411 / UW-3/Cx).